Consider the following 230-residue polypeptide: Magnesium-protoporphyrin O-methyltransferase (230 aa).

It belongs to the class I-like SAM-binding methyltransferase superfamily. Magnesium protoporphyrin O-methyltransferase family.

The enzyme catalyses Mg-protoporphyrin IX + S-adenosyl-L-methionine = Mg-protoporphyrin IX 13-monomethyl ester + S-adenosyl-L-homocysteine. It participates in porphyrin-containing compound metabolism; chlorophyll biosynthesis (light-independent). In terms of biological role, converts Mg-protoporphyrin IX to Mg-protoporphyrin IX methylester using S-adenosyl-L-methionine as a cofactor. This is Magnesium-protoporphyrin O-methyltransferase (chlM) from Synechocystis sp. (strain ATCC 27184 / PCC 6803 / Kazusa).